Here is a 219-residue protein sequence, read N- to C-terminus: Orotate phosphoribosyltransferase (219 aa).

5-phospho-alpha-D-ribose 1-diphosphate is bound at residue Lys26. 34–35 (FF) contributes to the orotate binding site. 5-phospho-alpha-D-ribose 1-diphosphate contacts are provided by residues 72–73 (YK), Arg98, Lys99, Lys102, His104, and 124–132 (DDVITAGTA). Orotate is bound by residues Thr128 and Arg156.

The protein belongs to the purine/pyrimidine phosphoribosyltransferase family. PyrE subfamily. Homodimer. Mg(2+) serves as cofactor.

It carries out the reaction orotidine 5'-phosphate + diphosphate = orotate + 5-phospho-alpha-D-ribose 1-diphosphate. Its pathway is pyrimidine metabolism; UMP biosynthesis via de novo pathway; UMP from orotate: step 1/2. In terms of biological role, catalyzes the transfer of a ribosyl phosphate group from 5-phosphoribose 1-diphosphate to orotate, leading to the formation of orotidine monophosphate (OMP). The chain is Orotate phosphoribosyltransferase from Xylella fastidiosa (strain Temecula1 / ATCC 700964).